We begin with the raw amino-acid sequence, 179 residues long: Orotate phosphoribosyltransferase (179 aa).

5-phospho-alpha-D-ribose 1-diphosphate contacts are provided by residues Arg94, Lys95, Lys98, His100, and 120 to 128 (EDTSTTGNS). 2 residues coordinate orotate: Thr124 and Arg152.

It belongs to the purine/pyrimidine phosphoribosyltransferase family. PyrE subfamily. In terms of assembly, homodimer. Requires Mg(2+) as cofactor.

The enzyme catalyses orotidine 5'-phosphate + diphosphate = orotate + 5-phospho-alpha-D-ribose 1-diphosphate. Its pathway is pyrimidine metabolism; UMP biosynthesis via de novo pathway; UMP from orotate: step 1/2. Functionally, catalyzes the transfer of a ribosyl phosphate group from 5-phosphoribose 1-diphosphate to orotate, leading to the formation of orotidine monophosphate (OMP). In Mycobacterium bovis (strain ATCC BAA-935 / AF2122/97), this protein is Orotate phosphoribosyltransferase.